A 361-amino-acid chain; its full sequence is DNA-(apurinic or apyrimidinic site) endonuclease (361 aa).

The disordered stretch occupies residues 1-90; that stretch reads MTSRTKKLKM…TNKTTASVSI (90 aa). The segment covering 25-39 has biased composition (acidic residues); that stretch reads TSEEEKEEVEEEEEE. A Nuclear localization signal motif is present at residues 41 to 44; the sequence is KKRK. Basic residues predominate over residues 43-64; it reads RKLVKKTPAKKAPAKKAAAKKK. Residues 68 to 80 show a composition bias toward acidic residues; that stretch reads EDEDEEEKEEEEE. Mg(2+) is bound at residue Glu-139. Tyr-211 is an active-site residue. Mg(2+) contacts are provided by Asp-252, Asn-254, and Asp-350. Asp-252 functions as the Proton donor/acceptor in the catalytic mechanism.

Belongs to the DNA repair enzymes AP/ExoA family. It depends on Mg(2+) as a cofactor. Mn(2+) is required as a cofactor.

The protein localises to the nucleus. The polypeptide is DNA-(apurinic or apyrimidinic site) endonuclease (apeA) (Dictyostelium discoideum (Social amoeba)).